The following is a 380-amino-acid chain: Crotonobetainyl-CoA reductase (380 aa).

It belongs to the acyl-CoA dehydrogenase family. In terms of assembly, homotetramer. Requires FAD as cofactor.

It is found in the cytoplasm. The catalysed reaction is 4-(trimethylamino)butanoyl-CoA + oxidized [electron-transfer flavoprotein] + H(+) = crotonobetainyl-CoA + reduced [electron-transfer flavoprotein]. It functions in the pathway amine and polyamine metabolism; carnitine metabolism. In terms of biological role, catalyzes the reduction of crotonobetainyl-CoA to gamma-butyrobetainyl-CoA. The polypeptide is Crotonobetainyl-CoA reductase (Salmonella typhi).